The sequence spans 537 residues: Caspase recruitment domain-containing protein 8 (537 aa).

Basic and acidic residues predominate over residues methionine 1–glycine 23. Disordered stretches follow at residues methionine 1–isoleucine 28 and glycine 113–isoleucine 133. Residues phenylalanine 161 to phenylalanine 296 form a ZU5 region. One can recognise an FIIND domain in the interval phenylalanine 161 to proline 446. Residues serine 297–proline 446 are UPA. The CARD domain occupies proline 446–asparagine 536.

In terms of assembly, interacts with DPP9; leading to inhibit activation of the inflammasome. DPP9 acts via formation of a ternary complex, composed of a DPP9 homodimer, one full-length CARD8 protein, and one cleaved C-terminus of CARD8 (Caspase recruitment domain-containing protein 8, C-terminus). Interacts with DPP8; leading to inhibit activation of the inflammasome, probably via formation of a ternary complex with DPP8. Interacts with NLRP3. Interacts with IKBKG/NEMO. Interacts with DRAL. Binds to caspase-1 (CASP1), CARD16/pseudo-ICE and CARD18/ICEBERG. Interacts with NLRP2 (via NACHT domain). Interacts with the C-terminal part of CARD8 (Caspase recruitment domain-containing protein 8, C-terminus) in absence of pathogens and other damage-associated signals. As to quaternary structure, interacts with the N-terminal part of CARD8 (Caspase recruitment domain-containing protein 8, N-terminus) in absence of pathogens and other damage-associated signals. Homomultimer; forms the CARD8 inflammasome polymeric complex, a filament composed of homopolymers of this form in response to pathogens and other damage-associated signals. The CARD8 inflammasome polymeric complex directly recruits pro-caspase-1 (proCASP1) independently of PYCARD/ASC. Interacts (via CARD domain) with CASP1 (via CARD domain); leading to CASP1 activation. In terms of processing, undergoes autocatalytic processing within the FIIND domain to generate the N-terminal and C-terminal parts, which are associated non-covalently in absence of pathogens and other damage-associated signals. Ubiquitinated by the N-end rule pathway in response to pathogens and other damage-associated signals, leading to its degradation by the proteasome and subsequent release of the cleaved C-terminal part of the protein (Caspase recruitment domain-containing protein 8, C-terminus), which polymerizes and forms the CARD8 inflammasome. Post-translationally, (Microbial infection) Proteolytic cleavage by HIV-1 protease in the disordered region and within the ZU5 region of the FIIND domain promotes ubiquitination of the N-terminal part by the N-end rule pathway and degradation by the proteasome, releasing the cleaved C-terminal part of the protein (Caspase recruitment domain-containing protein 8, C-terminus), which polymerizes and forms the CARD8 inflammasome. In terms of processing, undergoes less autocatalytic processing within the FIIND domain compared to isoform 5. As to expression, high expression in lung, ovary, testis and placenta. Lower expression in heart, kidney and liver. Also expressed in spleen, lymph node and bone marrow.

It localises to the cytoplasm. Its subcellular location is the nucleus. It is found in the inflammasome. With respect to regulation, CARD8 inflammasome is activated by HIV-1 protease activity: HIV-1 protease cleaves CARD8, promoting ubiquitination and degradation of the N-terminal part, releasing the cleaved C-terminal part of the protein (Caspase recruitment domain-containing protein 8, C-terminus), which polymerizes and forms the CARD8 inflammasome. CARD8 inflammasome is inhibited by DPP8 and DPP9, which sequester the C-terminal fragment of CARD8 (Caspase recruitment domain-containing protein 8, C-terminus) in a ternary complex, thereby preventing CARD8 oligomerization and activation. CARD8 inflammasome is activated by Val-boroPro (Talabostat, PT-100), an inhibitor of dipeptidyl peptidases DPP8 and DPP9. Val-boroPro relieves inhibition of DPP8 and/or DPP9 by inducing the proteasome-mediated destruction of the N-terminal part of CARD8, releasing its C-terminal part from autoinhibition. Indirectly activated by the pseudodipeptide CQ31. CQ31 directly inactivates the peptidases PEPD and XPNPEP1, leading to an accumulation of dipeptides that weaky inhibit DDP8 and DPP9, relieving DPP8- and/or DPP9-mediated inhibition of CARD8. In terms of biological role, inflammasome sensor, which mediates inflammasome activation in response to various pathogen-associated signals, leading to subsequent pyroptosis of CD4(+) T-cells and macrophages. Inflammasomes are supramolecular complexes that assemble in the cytosol in response to pathogens and other damage-associated signals and play critical roles in innate immunity and inflammation. Acts as a recognition receptor (PRR): recognizes specific pathogens and other damage-associated signals, such as HIV-1 protease activity or Val-boroPro inhibitor, and mediates CARD8 inflammasome activation. In response to pathogen-associated signals, the N-terminal part of CARD8 is degraded by the proteasome, releasing the cleaved C-terminal part of the protein (Caspase recruitment domain-containing protein 8, C-terminus), which polymerizes to initiate the formation of the inflammasome complex: the CARD8 inflammasome directly recruits pro-caspase-1 (proCASP1) independently of PYCARD/ASC and promotes caspase-1 (CASP1) activation, which subsequently cleaves and activates inflammatory cytokines IL1B and IL18 and gasdermin-D (GSDMD), leading to pyroptosis. Ability to sense HIV-1 protease activity leads to the clearance of latent HIV-1 in patient CD4(+) T-cells after viral reactivation; in contrast, HIV-1 can evade CARD8-sensing when its protease remains inactive in infected cells prior to viral budding. Also acts as a negative regulator of the NLRP3 inflammasome. May also act as an inhibitor of NF-kappa-B activation. Constitutes the precursor of the CARD8 inflammasome, which mediates autoproteolytic processing within the FIIND domain to generate the N-terminal and C-terminal parts, which are associated non-covalently in absence of pathogens and other damage-associated signals. Functionally, regulatory part that prevents formation of the CARD8 inflammasome: in absence of pathogens and other damage-associated signals, interacts with the C-terminal part of CARD8 (Caspase recruitment domain-containing protein 8, C-terminus), preventing activation of the CARD8 inflammasome. In response to pathogen-associated signals, this part is ubiquitinated by the N-end rule pathway and degraded by the proteasome, releasing the cleaved C-terminal part of the protein, which polymerizes and forms the CARD8 inflammasome. Its function is as follows. Constitutes the active part of the CARD8 inflammasome. In absence of pathogens and other damage-associated signals, interacts with the N-terminal part of CARD8 (Caspase recruitment domain-containing protein 8, N-terminus), preventing activation of the CARD8 inflammasome. In response to pathogen-associated signals, the N-terminal part of CARD8 is degraded by the proteasome, releasing this form, which polymerizes to form the CARD8 inflammasome complex: the CARD8 inflammasome complex then directly recruits pro-caspase-1 (proCASP1) and promotes caspase-1 (CASP1) activation, leading to gasdermin-D (GSDMD) cleavage and subsequent pyroptosis. The polypeptide is Caspase recruitment domain-containing protein 8 (Homo sapiens (Human)).